Reading from the N-terminus, the 330-residue chain is Phenylalanine--tRNA ligase alpha subunit (330 aa).

Glu-255 contributes to the Mg(2+) binding site.

It belongs to the class-II aminoacyl-tRNA synthetase family. Phe-tRNA synthetase alpha subunit type 1 subfamily. In terms of assembly, tetramer of two alpha and two beta subunits. It depends on Mg(2+) as a cofactor.

The protein localises to the cytoplasm. The catalysed reaction is tRNA(Phe) + L-phenylalanine + ATP = L-phenylalanyl-tRNA(Phe) + AMP + diphosphate + H(+). This Acinetobacter baumannii (strain AYE) protein is Phenylalanine--tRNA ligase alpha subunit.